We begin with the raw amino-acid sequence, 645 residues long: 1-deoxy-D-xylulose-5-phosphate synthase (645 aa).

Residues His-87 and 128–130 (GHS) each bind thiamine diphosphate. Asp-159 is a Mg(2+) binding site. Thiamine diphosphate contacts are provided by residues 160-161 (GA), Asn-188, Phe-295, and Glu-384. Residue Asn-188 participates in Mg(2+) binding.

The protein belongs to the transketolase family. DXPS subfamily. In terms of assembly, homodimer. Requires Mg(2+) as cofactor. The cofactor is thiamine diphosphate.

It carries out the reaction D-glyceraldehyde 3-phosphate + pyruvate + H(+) = 1-deoxy-D-xylulose 5-phosphate + CO2. Its pathway is metabolic intermediate biosynthesis; 1-deoxy-D-xylulose 5-phosphate biosynthesis; 1-deoxy-D-xylulose 5-phosphate from D-glyceraldehyde 3-phosphate and pyruvate: step 1/1. In terms of biological role, catalyzes the acyloin condensation reaction between C atoms 2 and 3 of pyruvate and glyceraldehyde 3-phosphate to yield 1-deoxy-D-xylulose-5-phosphate (DXP). The chain is 1-deoxy-D-xylulose-5-phosphate synthase from Alcanivorax borkumensis (strain ATCC 700651 / DSM 11573 / NCIMB 13689 / SK2).